Consider the following 216-residue polypeptide: Inner membrane assembly complex subunit 22 (216 aa).

Residues 1–26 constitute a mitochondrion transit peptide; sequence MFMARQVLRNGLFLRSLAPIKITART. Topologically, residues 27-43 are mitochondrial matrix; that stretch reads VASANAGIKRKSRFDKT. The helical transmembrane segment at 44-63 threads the bilayer; the sequence is MIKPLLLVMIFGSILNAVIA. The stretch at 64–93 forms a coiled coil; the sequence is EKRNIIDMERKYKLKLDKLKELIRRVHDNN. Over 64 to 216 the chain is Mitochondrial intermembrane; the sequence is EKRNIIDMER…KEHDKIPKFL (153 aa).

Component of the inner membrane assembly (INA) complex, composed of INA17 and INA22. Interacts with a subset of F(1)F(0)-ATP synthase subunits of the F(1)-domain and the peripheral stalk.

It is found in the mitochondrion inner membrane. Functionally, component of the INA complex (INAC) that promotes the biogenesis of mitochondrial F(1)F(0)-ATP synthase. INAC facilitates the assembly of the peripheral stalk and promotes the assembly of the catalytic F(1)-domain with the membrane-embedded F(0)-domain. In Saccharomyces cerevisiae (strain ATCC 204508 / S288c) (Baker's yeast), this protein is Inner membrane assembly complex subunit 22.